Consider the following 156-residue polypeptide: Small ribosomal subunit protein uS7 (156 aa).

It belongs to the universal ribosomal protein uS7 family. As to quaternary structure, part of the 30S ribosomal subunit. Contacts proteins S9 and S11.

One of the primary rRNA binding proteins, it binds directly to 16S rRNA where it nucleates assembly of the head domain of the 30S subunit. Is located at the subunit interface close to the decoding center, probably blocks exit of the E-site tRNA. The protein is Small ribosomal subunit protein uS7 of Picosynechococcus sp. (strain ATCC 27264 / PCC 7002 / PR-6) (Agmenellum quadruplicatum).